We begin with the raw amino-acid sequence, 375 residues long: Enoyl-[acyl-carrier-protein] reductase [NADH] 1, chloroplastic (375 aa).

The transit peptide at 1–67 directs the protein to the chloroplast; sequence MGASAATGMQ…SSKRSGVAIR (67 aa). NAD(+) is bound by residues glycine 91, tyrosine 98, 155–156, 202–203, and leucine 252; these read DA and SL. Catalysis depends on proton acceptor residues tyrosine 254 and tyrosine 264. Residues lysine 272 and 302-306 contribute to the NAD(+) site; that span reads LGSRA.

The protein belongs to the short-chain dehydrogenases/reductases (SDR) family. FabI subfamily. Homotetramer.

It localises to the plastid. It is found in the chloroplast. The catalysed reaction is a 2,3-saturated acyl-[ACP] + NAD(+) = a (2E)-enoyl-[ACP] + NADH + H(+). It functions in the pathway lipid metabolism; fatty acid biosynthesis. Catalyzes the NAD-dependent reduction of a carbon-carbon double bond in an enoyl moiety that is covalently linked to an acyl carrier protein (ACP). Catalyzes the last reduction step in the de novo synthesis cycle of fatty acids. Involved in the elongation cycle of fatty acids which are used in lipid metabolism. Required for normal plant growth. In Oryza sativa subsp. japonica (Rice), this protein is Enoyl-[acyl-carrier-protein] reductase [NADH] 1, chloroplastic.